The following is a 336-amino-acid chain: Tetraacyldisaccharide 4'-kinase (336 aa).

60–67 (TVGGTGKT) provides a ligand contact to ATP.

It belongs to the LpxK family.

The catalysed reaction is a lipid A disaccharide + ATP = a lipid IVA + ADP + H(+). It participates in glycolipid biosynthesis; lipid IV(A) biosynthesis; lipid IV(A) from (3R)-3-hydroxytetradecanoyl-[acyl-carrier-protein] and UDP-N-acetyl-alpha-D-glucosamine: step 6/6. Its function is as follows. Transfers the gamma-phosphate of ATP to the 4'-position of a tetraacyldisaccharide 1-phosphate intermediate (termed DS-1-P) to form tetraacyldisaccharide 1,4'-bis-phosphate (lipid IVA). This Pseudomonas fluorescens (strain Pf0-1) protein is Tetraacyldisaccharide 4'-kinase.